The chain runs to 775 residues: MVYAHNLGFPRIGIKREMKKTVEAYWRGEISQQQLQQQAIELQLTNWKIQAEAGVDLIPVGDFSWYDHVLDMAVRVGAIPSRFKALNSNITDTMFCMARGQAPNGIETSACEMTKWFDTNYHYIVPEFTTNQSFELHHDDLFKSTKLALENNYRAKPVILGPLSFLWLGKCKGESFNKLLLLEKLLPVYAEIFEQLSSLGVEWVQVDEPILVLDLPPEWQQAFLTTYQQLNFFNLKCLLATYFGSLDDNLSLTCQLPVDGLHIDYCRAPDQLDSVLSQLPAEKILSVGIIDGRNIWCNDLNRSLTLLENIQSSLGDRLWVAPSCSLLHVPIDLDQENKLDVELKSWFAFAKQKVAEAAFLTRGLREGRESIGAELKKNEEVIISRKTSKRIHNPNVEKKAASVTERLMRRQHEHSIRKNKQTAQLNLPLFPTTTIGSFPQTSQIRCLRRDYKQGKIDDALYEEKIRQEIAEVIGIQVKLGLDVLVHGEPERNDMVEYFGELLDGIAITSNGWVQSYGSRCVKPPIIFGDVSRERPMTLRWIEYAQSLTTKSVKGMLTGPVTILAWSFVRDDQPRSQTAKQIALALRDEVQDLERSGVRVIQIDEPAFRECLPLRKAAWQDYLEWAVKCFRLASCGVKDETQIHTHMCYSEFNDIIEAIAALDADVITIESSRSEMEILKSFEKFAYPNDIGPGIYDIHSPRIPRVAEIEELAVRALQYIPIERLWINPDCGLKTRNWEETKEALSRMVDAAKHLRKAFSSEKTPTIDLELQPAST.

Residues R16–K19 and K115 each bind 5-methyltetrahydropteroyltri-L-glutamate. L-homocysteine is bound by residues I435–S437 and E488. Residues I435 to S437 and E488 contribute to the L-methionine site. Residues R519 to C520 and W565 each bind 5-methyltetrahydropteroyltri-L-glutamate. An L-homocysteine-binding site is contributed by D603. D603 serves as a coordination point for L-methionine. Residue E609 participates in 5-methyltetrahydropteroyltri-L-glutamate binding. Positions 645, 647, and 669 each coordinate Zn(2+). The active-site Proton donor is H698. C730 provides a ligand contact to Zn(2+).

The protein belongs to the vitamin-B12 independent methionine synthase family. Zn(2+) serves as cofactor.

It carries out the reaction 5-methyltetrahydropteroyltri-L-glutamate + L-homocysteine = tetrahydropteroyltri-L-glutamate + L-methionine. The protein operates within amino-acid biosynthesis; L-methionine biosynthesis via de novo pathway; L-methionine from L-homocysteine (MetE route): step 1/1. Its function is as follows. Catalyzes the transfer of a methyl group from 5-methyltetrahydrofolate to homocysteine resulting in methionine formation. The chain is 5-methyltetrahydropteroyltriglutamate--homocysteine methyltransferase from Coxiella burnetii (strain Dugway 5J108-111).